The primary structure comprises 433 residues: Adenosylhomocysteinase B (433 aa).

The substrate site is built by T57, D132, E157, K187, and D191. The interval 184 to 351 (SVTKSKFDNL…EGRLVNLGCA (168 aa)) is NAD binding.

Belongs to the adenosylhomocysteinase family. In terms of assembly, homotetramer. The cofactor is NAD(+).

The protein resides in the cytoplasm. It catalyses the reaction S-adenosyl-L-homocysteine + H2O = L-homocysteine + adenosine. It functions in the pathway amino-acid biosynthesis; L-homocysteine biosynthesis; L-homocysteine from S-adenosyl-L-homocysteine: step 1/1. Functionally, catalyzes the hydrolysis of S-adenosyl-L-homocysteine to form adenosine and homocysteine. Binds copper ions. The protein is Adenosylhomocysteinase B (ahcy-b) of Xenopus laevis (African clawed frog).